The primary structure comprises 2571 residues: Stabilin-1 (2571 aa).

Residues 1–25 form the signal peptide; the sequence is MAEPRTLLLLCVLVLCLSDSSFIRG. The Extracellular portion of the chain corresponds to 26–2475; that stretch reads QTVRSKRCDI…RAVLGSEPPP (2450 aa). EGF-like domains follow at residues 111–149, 157–194, 196–232, and 233–272; these read FECP…SVCQ, FGPD…PHCD, ELPV…NVCL, and APDP…KVCL. 12 disulfides stabilise this stretch: C113-C127, C121-C137, C139-C148, C161-C172, C165-C182, C184-C193, C200-C211, C205-C218, C220-C231, C237-C248, C242-C258, and C260-C271. Residues N134 and N142 are each glycosylated (N-linked (GlcNAc...) asparagine). N-linked (GlcNAc...) asparagine glycosylation is found at N287, N313, N416, N607, N674, N713, and N746. 2 consecutive FAS1 domains span residues 357–495 and 507–642; these read YGHL…TALR and KKTV…EGIL. The EGF-like 5 domain occupies 729-769; sequence DCTQCPGGFSNPCYGKGNCSDGVRGNGACLCFPDYKGIACH. 3 disulfide bridges follow: C733/C747, C741/C757, and C759/C768. An N-linked (GlcNAc...) asparagine glycan is attached at N817. 4 EGF-like domains span residues 819–859, 862–904, 905–947, and 948–987; these read SMGN…NGFS, RSNP…RICV, AIDE…YECS, and PIDP…DGFS. Intrachain disulfides connect C823–C838, C832–C847, C866–C880, C874–C890, C892–C903, C909–C923, C917–C933, C935–C946, C952–C965, and C959–C975. 2 consecutive FAS1 domains span residues 989 to 1119 and 1129 to 1254; these read YGDI…SQVL and GPGL…SGIL. Residues N1011, N1088, N1097, N1171, N1179, N1223, and N1275 are each glycosylated (N-linked (GlcNAc...) asparagine). The region spanning 1328–1393 is the Laminin EGF-like 1 domain; that stretch reads TLCEPCPGGL…CDCDHGLCQE (66 aa). Cystine bridges form between C1333/C1347, C1341/C1357, C1359/C1368, C1380/C1391, C1384/C1401, C1403/C1412, C1421/C1431, C1425/C1441, C1443/C1454, C1460/C1473, C1467/C1483, C1485/C1496, C1502/C1515, C1509/C1525, C1527/C1539, C1545/C1558, C1552/C1568, and C1570/C1582. Residue N1398 is glycosylated (N-linked (GlcNAc...) asparagine). EGF-like domains lie at 1417-1455, 1456-1497, 1498-1540, and 1541-1583; these read TDHQ…SYCS, EVDP…ELCQ, EINS…QTCK, and LLDP…ITCH. Residues N1450 and N1472 are each glycosylated (N-linked (GlcNAc...) asparagine). 2 FAS1 domains span residues 1583 to 1709 and 1725 to 1865; these read HGRV…DHVL and PQRN…DQLL. Residues N1627 and N1728 are each glycosylated (N-linked (GlcNAc...) asparagine). Residues 1966–2031 form the Laminin EGF-like 2 domain; sequence INCHACPGGP…RCTQHGRCDE (66 aa). Intrachain disulfides connect C1971/C1985, C1979/C1995, C1997/C2006, C2018/C2029, C2023/C2039, C2041/C2050, C2060/C2070, C2064/C2076, C2078/C2089, C2095/C2108, C2102/C2117, C2119/C2130, C2136/C2150, C2144/C2160, C2162/C2173, C2230/C2299, and C2254/C2275. 3 EGF-like domains span residues 2056 to 2090, 2091 to 2131, and 2132 to 2174; these read LQPV…RVCT, VADL…WSCR, and ARDP…LQCL. The N-linked (GlcNAc...) asparagine glycan is linked to N2107. The Link domain maps to 2208 to 2301; that stretch reads GVFHIQATSG…SELWDAYCYR (94 aa). Residues N2261, N2290, N2334, N2347, N2379, N2393, N2400, and N2424 are each glycosylated (N-linked (GlcNAc...) asparagine). The region spanning 2322-2459 is the FAS1 7 domain; that stretch reads NGKLLDVLAA…GIIHALASPL (138 aa). The chain crosses the membrane as a helical span at residues 2476–2496; the sequence is VALSLGVVVTSGTLLGLVAGA. Residues 2497 to 2571 lie on the Cytoplasmic side of the membrane; that stretch reads LYLRARGKPP…PDTQRVLKVK (75 aa).

In terms of assembly, interacts with CHID1.

Its subcellular location is the membrane. In terms of biological role, acts as a scavenger receptor for acetylated low density lipoprotein. Binds to both Gram-positive and Gram-negative bacteria and may play a role in defense against bacterial infection. When inhibited in endothelial tube formation assays, there is a marked decrease in cell-cell interactions, suggesting a role in angiogenesis. Involved in the delivery of newly synthesized CHID1/SI-CLP from the biosynthetic compartment to the endosomal/lysosomal system. The sequence is that of Stabilin-1 (Stab1) from Mus musculus (Mouse).